The primary structure comprises 494 residues: MARQQGWFALLIALVISAFLLCINLPFQLGLDLRGGSQLTLEVQALNPNEQIKSEQLEAVQSVLDRRVNGLGVAESSLRTIGTNQLILELPGEQEPSKAARVLGKTALLEFRKQKINTKSEMQRLQRIRSQVNNIDLYKKASKDNKSELIENKKIGEQVNDLRVALGLANSSLNEHDQIDQIRQKVNSEIVELFEPSSLTGSDLVSAGRRQEQNLTSWEVTLAFNQDGGEKFASLTKSIAGSDRLLGIILDGESISEASVGEQFKVAGITGGSATISGNFTAESARELEVQLRGGSLPLPVSIVQVRTIGPTLGVDNIRRSLIAALLGLSLVAIFMVSFYRLAGFIAIFALSFYALFNIAIYALIPVTLTLPGVAGFVLSIGMAVDANVLIFERVKDELRRGNTLIRSIETGFSQAFSSIIDGHITTLISCISLFYLGTGFVKGFAATLGIGVFISLFTALSCTRVLLRFFMSYKSLRKTTNFLSENQLPKQLT.

Helical transmembrane passes span 7–27 (WFAL…NLPF), 322–342 (LIAA…FYRL), 345–365 (FIAI…YALI), 372–392 (PGVA…VLIF), 420–440 (IIDG…LGTG), and 441–461 (FVKG…FTAL).

This sequence belongs to the SecD/SecF family. SecD subfamily. In terms of assembly, forms a complex with SecF. Part of the essential Sec protein translocation apparatus which comprises SecA, SecYEG and auxiliary proteins SecDF. Other proteins may also be involved.

Its subcellular location is the cell inner membrane. Part of the Sec protein translocase complex. Interacts with the SecYEG preprotein conducting channel. SecDF uses the proton motive force (PMF) to complete protein translocation after the ATP-dependent function of SecA. In terms of biological role, probably participates in protein translocation into and across both the cytoplasmic and thylakoid membranes in cyanobacterial cells. The polypeptide is Protein translocase subunit SecD (Prochlorococcus marinus (strain SARG / CCMP1375 / SS120)).